A 513-amino-acid polypeptide reads, in one-letter code: Bifunctional purine biosynthesis protein PurH (513 aa).

An MGS-like domain is found at 1-145 (MTKKAIISVY…KNFKYITVII (145 aa)).

The protein belongs to the PurH family.

The enzyme catalyses (6R)-10-formyltetrahydrofolate + 5-amino-1-(5-phospho-beta-D-ribosyl)imidazole-4-carboxamide = 5-formamido-1-(5-phospho-D-ribosyl)imidazole-4-carboxamide + (6S)-5,6,7,8-tetrahydrofolate. It catalyses the reaction IMP + H2O = 5-formamido-1-(5-phospho-D-ribosyl)imidazole-4-carboxamide. It participates in purine metabolism; IMP biosynthesis via de novo pathway; 5-formamido-1-(5-phospho-D-ribosyl)imidazole-4-carboxamide from 5-amino-1-(5-phospho-D-ribosyl)imidazole-4-carboxamide (10-formyl THF route): step 1/1. Its pathway is purine metabolism; IMP biosynthesis via de novo pathway; IMP from 5-formamido-1-(5-phospho-D-ribosyl)imidazole-4-carboxamide: step 1/1. This is Bifunctional purine biosynthesis protein PurH from Caldicellulosiruptor saccharolyticus (strain ATCC 43494 / DSM 8903 / Tp8T 6331).